The chain runs to 1645 residues: Thrombospondin type-1 domain-containing protein 7A (1645 aa).

A signal peptide spans 1–38; sequence MGLRAGRLASPSRGVLQLLRLPLLLLLLLSSGARGAAA. Topologically, residues 39–1595 are extracellular; it reads QGDTEVPTLY…FGPDGRLKTW (1557 aa). 3 TSP type-1 domains span residues 46 to 105, 109 to 181, and 183 to 236; these read TLYL…KVCD, ELYD…IPCQ, and DCIV…NPCE. Asn223 is a glycosylation site (N-linked (GlcNAc...) asparagine). The tract at residues 255 to 300 is disordered; the sequence is PHTRQARQARRRGKNKEREKERGKAVKDPEARELIKKKRNRNRQNR. Positions 256–304 form a coiled coil; that stretch reads HTRQARQARRRGKNKEREKERGKAVKDPEARELIKKKRNRNRQNRQENR. The span at 258-269 shows a compositional bias: basic residues; that stretch reads RQARQARRRGKN. The span at 270-288 shows a compositional bias: basic and acidic residues; sequence KEREKERGKAVKDPEAREL. Over residues 289–298 the composition is skewed to basic residues; the sequence is IKKKRNRNRQ. An N-linked (GlcNAc...) asparagine glycan is attached at Asn321. TSP type-1 domains follow at residues 349-405, 412-499, 501-563, 623-684, 685-758, 760-820, 821-893, 895-948, 949-1022, 1024-1084, 1085-1152, 1154-1208, 1209-1272, 1274-1329, 1330-1400, and 1402-1463; these read ECQV…VSQG, ATYG…VPCP, ECEV…PSCY, DCVL…HPCT, VYHW…LPCR, DCVV…PTCH, SYRW…IPCQ, DCQF…CPCD, KYNA…IPCP, DCKL…SDCN, QYIW…LPCP, DCVI…KNCY, HYDY…VECP, NCQL…KPCY, RWQY…QPCP, and DCYL…GQCY. Cystine bridges form between Cys424-Cys494, Cys444-Cys498, and Cys455-Cys483. Asn439 is a glycosylation site (N-linked (GlcNAc...) asparagine). N-linked (GlcNAc...) asparagine glycosylation is present at Asn489. Disulfide bonds link Cys624–Cys666 and Cys635–Cys639. The N-linked (GlcNAc...) asparagine glycan is linked to Asn668. 7 disulfide bridges follow: Cys678/Cys683, Cys696/Cys753, Cys717/Cys757, Cys728/Cys741, Cys761/Cys803, Cys772/Cys776, and Cys813/Cys819. The N-linked (GlcNAc...) asparagine glycan is linked to Asn706. Residue Asn957 is glycosylated (N-linked (GlcNAc...) asparagine). Cystine bridges form between Cys961–Cys1017, Cys983–Cys1021, Cys994–Cys1007, Cys1025–Cys1062, Cys1036–Cys1040, and Cys1079–Cys1083. N-linked (GlcNAc...) asparagine glycosylation occurs at Asn1032. The cysteines at positions 1201 and 1207 are disulfide-linked. N-linked (GlcNAc...) asparagine glycosylation occurs at Asn1213. Cystine bridges form between Cys1220–Cys1267, Cys1228–Cys1271, Cys1239–Cys1252, Cys1275–Cys1313, Cys1286–Cys1290, Cys1323–Cys1328, Cys1339–Cys1395, Cys1346–Cys1399, Cys1357–Cys1376, Cys1403–Cys1447, Cys1414–Cys1418, and Cys1457–Cys1462. An N-linked (GlcNAc...) asparagine glycan is attached at Asn1264. Asn1354 carries N-linked (GlcNAc...) asparagine glycosylation. Asn1488 and Asn1535 each carry an N-linked (GlcNAc...) asparagine glycan. Residues 1596–1616 traverse the membrane as a helical segment; it reads VYGVAAGAFVLLVFIVSMIYL. Residues 1617 to 1645 lie on the Cytoplasmic side of the membrane; it reads ACKKPKKPQRRQNNRLKPLTLAYDGDADM.

In terms of processing, proteolytic cleavage in the extracellular region generates a 210 kDa soluble form. Post-translationally, extensively N-glycosylated. Detected on kidney podocytes along the glomerular capillary wall (at protein level).

It localises to the cell membrane. It is found in the cell projection. Its subcellular location is the secreted. Its function is as follows. Plays a role in actin cytoskeleton rearrangement. Functionally, the soluble form promotes endothelial cell migration and filopodia formation during sprouting angiogenesis via a FAK-dependent mechanism. The chain is Thrombospondin type-1 domain-containing protein 7A (Thsd7a) from Mus musculus (Mouse).